A 725-amino-acid polypeptide reads, in one-letter code: 1,4-alpha-glucan branching enzyme GlgB (725 aa).

The Nucleophile role is filled by aspartate 403. Glutamate 456 acts as the Proton donor in catalysis.

This sequence belongs to the glycosyl hydrolase 13 family. GlgB subfamily. Monomer.

It carries out the reaction Transfers a segment of a (1-&gt;4)-alpha-D-glucan chain to a primary hydroxy group in a similar glucan chain.. Its pathway is glycan biosynthesis; glycogen biosynthesis. Catalyzes the formation of the alpha-1,6-glucosidic linkages in glycogen by scission of a 1,4-alpha-linked oligosaccharide from growing alpha-1,4-glucan chains and the subsequent attachment of the oligosaccharide to the alpha-1,6 position. This is 1,4-alpha-glucan branching enzyme GlgB from Pectobacterium atrosepticum (strain SCRI 1043 / ATCC BAA-672) (Erwinia carotovora subsp. atroseptica).